Consider the following 418-residue polypeptide: 3-phosphoshikimate 1-carboxyvinyltransferase (418 aa).

Lys-26, Ser-27, and Arg-31 together coordinate 3-phosphoshikimate. Lys-26 is a phosphoenolpyruvate binding site. Phosphoenolpyruvate contacts are provided by Gly-97 and Arg-125. 3-phosphoshikimate-binding residues include Ser-170, Ser-171, Gln-172, Asp-297, Asn-320, and Lys-324. Gln-172 lines the phosphoenolpyruvate pocket. Asp-297 acts as the Proton acceptor in catalysis. Phosphoenolpyruvate is bound by residues Arg-328, Arg-375, and Lys-400.

The protein belongs to the EPSP synthase family. As to quaternary structure, monomer.

The protein localises to the cytoplasm. It catalyses the reaction 3-phosphoshikimate + phosphoenolpyruvate = 5-O-(1-carboxyvinyl)-3-phosphoshikimate + phosphate. Its pathway is metabolic intermediate biosynthesis; chorismate biosynthesis; chorismate from D-erythrose 4-phosphate and phosphoenolpyruvate: step 6/7. Its function is as follows. Catalyzes the transfer of the enolpyruvyl moiety of phosphoenolpyruvate (PEP) to the 5-hydroxyl of shikimate-3-phosphate (S3P) to produce enolpyruvyl shikimate-3-phosphate and inorganic phosphate. The sequence is that of 3-phosphoshikimate 1-carboxyvinyltransferase from Pseudomonas savastanoi pv. phaseolicola (strain 1448A / Race 6) (Pseudomonas syringae pv. phaseolicola (strain 1448A / Race 6)).